The sequence spans 102 residues: Small ribosomal subunit protein eS24 (102 aa).

Belongs to the eukaryotic ribosomal protein eS24 family.

The polypeptide is Small ribosomal subunit protein eS24 (Methanococcus maripaludis (strain DSM 14266 / JCM 13030 / NBRC 101832 / S2 / LL)).